Here is a 40-residue protein sequence, read N- to C-terminus: Antimicrobial peptide 2 (40 aa).

The Chitin-binding type-1 domain occupies 1–40 (AQCGAQGGGATCPGGLCCSQWGWCGSTPKYCGAGCQSNCR). Disulfide bonds link cysteine 3–cysteine 18, cysteine 12–cysteine 24, cysteine 17–cysteine 31, and cysteine 35–cysteine 39.

In terms of processing, not glycosylated.

Its function is as follows. Antimicrobial peptide active against plant pathogenic fungi and Gram-negative and -positive bacteria. The polypeptide is Antimicrobial peptide 2 (Fagopyrum esculentum (Common buckwheat)).